The primary structure comprises 318 residues: MRSTPPASAGRSTPPALAGHSTPPALAGHSTLCGRPVAGDRALIMAIVNRTPDSFYDKGATFSDAAARDAVHRAVADGADVIDVGGVKAGPGERVDVDTEITRLVPFIEWLRGAYPDQLISVDTWRAQVAKAACAAGADLINDTWGGVDPAMPEVAAEFGAGLVCAHTGGALPRTRPFRVSYGTTTRGVVDAVISQVTAAAERAVAAGVAREKVLIDPAHDFGKNTFHGLLLLRHVADLVMTGWPVLMALSNKDVVGETLGVDLTERLEGTLAATALAAAAGARMFRVHEVAATRRVLEMVASIQGVRPPTRTVRGLA.

The tract at residues 1–25 (MRSTPPASAGRSTPPALAGHSTPPA) is disordered. One can recognise a Pterin-binding domain in the interval 42–299 (ALIMAIVNRT…EVAATRRVLE (258 aa)).

The protein belongs to the DHPS family. In terms of assembly, homodimer.

Has very low affinity for the DHPS substrate 6-hydroxymethyl-7,8-dihydropterin-pyrophosphate, but can bind the inhibitor dapsone. Seems to lack dihydropteroate synthase activity, and does probably not function in folate metabolism. This is Inactive dihydropteroate synthase 2 (folP2) from Mycobacterium bovis (strain ATCC BAA-935 / AF2122/97).